A 344-amino-acid polypeptide reads, in one-letter code: Fructose-1,6-bisphosphatase class 1 (344 aa).

Positions 91, 110, 112, and 113 each coordinate Mg(2+). Residues 113–116 and asparagine 200 each bind substrate; that span reads DGSS. Mg(2+) is bound at residue glutamate 272.

Belongs to the FBPase class 1 family. Homotetramer. Mg(2+) serves as cofactor.

The protein resides in the cytoplasm. The enzyme catalyses beta-D-fructose 1,6-bisphosphate + H2O = beta-D-fructose 6-phosphate + phosphate. It participates in carbohydrate biosynthesis; Calvin cycle. This chain is Fructose-1,6-bisphosphatase class 1, found in Rhodopseudomonas palustris (strain BisA53).